A 166-amino-acid chain; its full sequence is uncharacterized protein (166 aa).

Residues 2 to 82 form the GIY-YIG domain; the sequence is DNWVCYLIMS…KRLSKKRNIQ (81 aa). A disordered region spans residues 23-43; that stretch reads NNRQRRLNDHNNLNPSRKGAK.

This is an uncharacterized protein from Acanthamoeba polyphaga mimivirus (APMV).